The sequence spans 1399 residues: Dicer-like protein 2 (1399 aa).

Residues 18–194 (MVEESMQSNI…EDLQQIERNL (177 aa)) form the Helicase ATP-binding domain. Position 31–38 (31–38 (MDTGSGKT)) interacts with ATP. The DEAH box signature appears at 139 to 142 (DEAH). Residues 364-549 (KLQLLIKFLV…QSETGHRNFE (186 aa)) enclose the Helicase C-terminal domain. One can recognise a Dicer dsRNA-binding fold domain in the interval 562 to 656 (ASQHLHHFCS…LPARQEADDE (95 aa)). RNase III domains follow at residues 897–1054 (LPSI…TVGG) and 1094–1270 (LDVL…IDSL). Mg(2+) is bound by residues glutamate 1133, aspartate 1256, and glutamate 1259. The DRBM domain occupies 1301–1370 (HPKERLGHLA…AWKAVGVLES (70 aa)).

It belongs to the helicase family. Dicer subfamily. The cofactor is Mg(2+). Mn(2+) serves as cofactor.

Functionally, dicer-like endonuclease involved in cleaving double-stranded RNA in the RNA interference (RNAi) pathway. Produces 21 to 25 bp dsRNAs (siRNAs) which target the selective destruction of homologous RNAs leading to sequence-specific suppression of gene expression, called post-transcriptional gene silencing (PTGS). Part of a broad host defense response against viral infection and transposons. The protein is Dicer-like protein 2 (DCL2) of Phaeosphaeria nodorum (strain SN15 / ATCC MYA-4574 / FGSC 10173) (Glume blotch fungus).